We begin with the raw amino-acid sequence, 143 residues long: Alpha-amylase/trypsin inhibitor CM16 (143 aa).

Positions 1–24 are cleaved as a signal peptide; it reads MASKSNCVLLLAAVLVSIFAAVAA.

Belongs to the protease inhibitor I6 (cereal trypsin/alpha-amylase inhibitor) family. As to quaternary structure, subunit of the tetrameric inhibitor. Five disulfide bonds, which are essential for the inhibitor activity, are probably present. Developing endosperm.

The protein resides in the secreted. Functionally, alpha-amylase/trypsin inhibitor. It could be involved in insect defense mechanisms. The polypeptide is Alpha-amylase/trypsin inhibitor CM16 (Triticum aestivum (Wheat)).